A 235-amino-acid chain; its full sequence is Protein MAINTENANCE OF PSII UNDER HIGH LIGHT 1 (235 aa).

The chain crosses the membrane as a helical span at residues 127–147; that stretch reads TAAIVAGIALIAVAAASSILL. A disordered region spans residues 181–235; the sequence is QPSTPSVTEAPPVAELETSLPETPSVAQQETSLPETMASEAQPEASSVPTTSSTS. Composition is skewed to polar residues over residues 200 to 214 and 224 to 235; these read LPET…TSLP and EASSVPTTSSTS.

In terms of assembly, interacts with psbA, psbB, psbC and psbD.

It localises to the plastid. It is found in the chloroplast thylakoid membrane. In terms of biological role, interacts with photosystem II (PSII) core complexes and participates in the maintenance of normal PSII activity under photoinhibitory stress. May protect against photodamage or stabilize PSII under high-light stress. Participates in the maintainance of proper PSII function under high-light stress by protecting PSII from photooxidative damage. This Arabidopsis thaliana (Mouse-ear cress) protein is Protein MAINTENANCE OF PSII UNDER HIGH LIGHT 1.